We begin with the raw amino-acid sequence, 361 residues long: Anhydro-N-acetylmuramic acid kinase (361 aa).

Residue 10–17 (GTSLDGVD) coordinates ATP.

Belongs to the anhydro-N-acetylmuramic acid kinase family.

The catalysed reaction is 1,6-anhydro-N-acetyl-beta-muramate + ATP + H2O = N-acetyl-D-muramate 6-phosphate + ADP + H(+). It participates in amino-sugar metabolism; 1,6-anhydro-N-acetylmuramate degradation. It functions in the pathway cell wall biogenesis; peptidoglycan recycling. Functionally, catalyzes the specific phosphorylation of 1,6-anhydro-N-acetylmuramic acid (anhMurNAc) with the simultaneous cleavage of the 1,6-anhydro ring, generating MurNAc-6-P. Is required for the utilization of anhMurNAc either imported from the medium or derived from its own cell wall murein, and thus plays a role in cell wall recycling. The protein is Anhydro-N-acetylmuramic acid kinase of Gluconobacter oxydans (strain 621H) (Gluconobacter suboxydans).